Here is a 64-residue protein sequence, read N- to C-terminus: Large ribosomal subunit protein bL35 (64 aa).

It belongs to the bacterial ribosomal protein bL35 family.

In Ectopseudomonas mendocina (strain ymp) (Pseudomonas mendocina), this protein is Large ribosomal subunit protein bL35.